The following is a 231-amino-acid chain: Ureidoacrylate amidohydrolase RutB (231 aa).

Catalysis depends on Asp25, which acts as the Proton acceptor. Lys134 is a catalytic residue. Cys167 functions as the Nucleophile in the catalytic mechanism.

The protein belongs to the isochorismatase family. RutB subfamily.

It catalyses the reaction (Z)-3-ureidoacrylate + H2O + H(+) = (Z)-3-aminoacrylate + NH4(+) + CO2. It carries out the reaction (Z)-3-ureidoacrylate + H2O = (Z)-3-aminoacrylate + carbamate + H(+). The catalysed reaction is (Z)-2-methylureidoacrylate + H2O + H(+) = (Z)-2-methylaminoacrylate + NH4(+) + CO2. Its function is as follows. Hydrolyzes ureidoacrylate to form aminoacrylate and carbamate. The carbamate hydrolyzes spontaneously, thereby releasing one of the nitrogen atoms of the pyrimidine ring as ammonia and one of its carbon atoms as CO2. This chain is Ureidoacrylate amidohydrolase RutB, found in Escherichia coli O157:H7 (strain EC4115 / EHEC).